Here is a 500-residue protein sequence, read N- to C-terminus: POU domain, class 3, transcription factor 3 (500 aa).

Residues 32 to 52 (GGGGGGGGGGGGAGGGGGGMQ) are compositionally biased toward gly residues. 4 disordered regions span residues 32 to 63 (GGGGGGGGGGGGAGGGGGGMQPGSAAVTSGAY), 122 to 190 (WSGS…WGAA), 231 to 319 (NGML…TPTS), and 461 to 500 (EKRMTPPGIQQQTPDDVYSQVGTVSADTPPPHHGLQTSVQ). Pro residues-rich tracts occupy residues 134 to 146 (QQPPQPPPPPPQG) and 171 to 181 (HLGPPPPPPHQ). Residues 241–251 (GGGGGGAGGGA) are compositionally biased toward gly residues. Positions 270 to 287 (HHHHHHHHAHPHPPHPHH) are enriched in basic residues. Residues 293 to 303 (HHGGGGGGAGP) show a composition bias toward gly residues. The region spanning 314–388 (EDTPTSDDLE…LLNKWLEEAD (75 aa)) is the POU-specific domain. The segment at residues 406 to 465 (KRKKRTSIEVSVKGALESHFLKCPKPSAQEITNLADSLQLEKEVVRVWFCNRRQKEKRMT) is a DNA-binding region (homeobox). Over residues 468–486 (GIQQQTPDDVYSQVGTVSA) the composition is skewed to polar residues.

This sequence belongs to the POU transcription factor family. Class-3 subfamily. Homodimer. As to expression, brain.

The protein resides in the nucleus. Transcription factor that acts synergistically with SOX11 and SOX4. Plays a role in neuronal development. Is implicated in an enhancer activity at the embryonic met-mesencephalic junction; the enhancer element contains the octamer motif (5'-ATTTGCAT-3'). This Homo sapiens (Human) protein is POU domain, class 3, transcription factor 3.